A 294-amino-acid polypeptide reads, in one-letter code: 2-methoxy-6-polyprenyl-1,4-benzoquinol methylase, mitochondrial (294 aa).

A mitochondrion-targeting transit peptide spans 1–10 (MALRSAAGRL). S-adenosyl-L-methionine-binding positions include Thr-100, Asp-136, and 166-167 (DA).

This sequence belongs to the class I-like SAM-binding methyltransferase superfamily. MenG/UbiE family. As to quaternary structure, component of a multi-subunit COQ enzyme complex.

The protein resides in the mitochondrion inner membrane. It catalyses the reaction a 2-methoxy-6-(all-trans-polyprenyl)benzene-1,4-diol + S-adenosyl-L-methionine = a 5-methoxy-2-methyl-3-(all-trans-polyprenyl)benzene-1,4-diol + S-adenosyl-L-homocysteine + H(+). The protein operates within cofactor biosynthesis; ubiquinone biosynthesis. Methyltransferase required for the conversion of 2-polyprenyl-6-methoxy-1,4-benzoquinol (DDMQH2) to 2-polyprenyl-3-methyl-6-methoxy-1,4-benzoquinol (DMQH2). In Oryza sativa subsp. japonica (Rice), this protein is 2-methoxy-6-polyprenyl-1,4-benzoquinol methylase, mitochondrial.